We begin with the raw amino-acid sequence, 150 residues long: Large ribosomal subunit protein uL15 (150 aa).

Residues 1 to 57 form a disordered region; the sequence is MSLTLQSLKPQKGARRRKMRKGRGIAAGQGASCGFGMRGQKSRSGRPTRPGFEGGQM. Positions 12–23 are enriched in basic residues; the sequence is KGARRRKMRKGR. Over residues 25-37 the composition is skewed to gly residues; the sequence is IAAGQGASCGFGM.

Belongs to the universal ribosomal protein uL15 family. In terms of assembly, part of the 50S ribosomal subunit.

In terms of biological role, binds to the 23S rRNA. The chain is Large ribosomal subunit protein uL15 from Synechococcus sp. (strain RCC307).